Reading from the N-terminus, the 391-residue chain is S-adenosylmethionine synthase (391 aa).

An ATP-binding site is contributed by histidine 19. Aspartate 21 is a binding site for Mg(2+). Residue glutamate 47 coordinates K(+). The L-methionine site is built by glutamate 60 and glutamine 103. The segment at 103–113 (QSPDIAQGVDR) is flexible loop. Residues 168–170 (DGK), 236–237 (RF), aspartate 245, 251–252 (RK), alanine 268, and lysine 272 each bind ATP. Aspartate 245 provides a ligand contact to L-methionine. Residue lysine 276 coordinates L-methionine.

It belongs to the AdoMet synthase family. Homotetramer; dimer of dimers. Requires Mg(2+) as cofactor. It depends on K(+) as a cofactor.

The protein resides in the cytoplasm. It catalyses the reaction L-methionine + ATP + H2O = S-adenosyl-L-methionine + phosphate + diphosphate. The protein operates within amino-acid biosynthesis; S-adenosyl-L-methionine biosynthesis; S-adenosyl-L-methionine from L-methionine: step 1/1. In terms of biological role, catalyzes the formation of S-adenosylmethionine (AdoMet) from methionine and ATP. The overall synthetic reaction is composed of two sequential steps, AdoMet formation and the subsequent tripolyphosphate hydrolysis which occurs prior to release of AdoMet from the enzyme. The chain is S-adenosylmethionine synthase from Oleidesulfovibrio alaskensis (strain ATCC BAA-1058 / DSM 17464 / G20) (Desulfovibrio alaskensis).